The following is a 355-amino-acid chain: Peptide chain release factor 1 (355 aa).

Q233 is subject to N5-methylglutamine.

The protein belongs to the prokaryotic/mitochondrial release factor family. In terms of processing, methylated by PrmC. Methylation increases the termination efficiency of RF1.

The protein localises to the cytoplasm. Functionally, peptide chain release factor 1 directs the termination of translation in response to the peptide chain termination codons UAG and UAA. This Caldicellulosiruptor saccharolyticus (strain ATCC 43494 / DSM 8903 / Tp8T 6331) protein is Peptide chain release factor 1.